A 476-amino-acid polypeptide reads, in one-letter code: Membrane-bound lytic murein transglycosylase F (476 aa).

Residues 1-16 form the signal peptide; that stretch reads MIKTLFIILLCGILSA. Residues 17–259 are non-LT domain; sequence CQPVDIQDVD…HLNEKYFGHV (243 aa). The segment at 260–476 is LT domain; that stretch reads KRFDYVDTRA…VPAKSHVSAQ (217 aa). Glu-304 is an active-site residue.

The protein in the N-terminal section; belongs to the bacterial solute-binding protein 3 family. This sequence in the C-terminal section; belongs to the transglycosylase Slt family.

The protein localises to the cell outer membrane. The catalysed reaction is Exolytic cleavage of the (1-&gt;4)-beta-glycosidic linkage between N-acetylmuramic acid (MurNAc) and N-acetylglucosamine (GlcNAc) residues in peptidoglycan, from either the reducing or the non-reducing ends of the peptidoglycan chains, with concomitant formation of a 1,6-anhydrobond in the MurNAc residue.. In terms of biological role, murein-degrading enzyme that degrades murein glycan strands and insoluble, high-molecular weight murein sacculi, with the concomitant formation of a 1,6-anhydromuramoyl product. Lytic transglycosylases (LTs) play an integral role in the metabolism of the peptidoglycan (PG) sacculus. Their lytic action creates space within the PG sacculus to allow for its expansion as well as for the insertion of various structures such as secretion systems and flagella. This Shewanella frigidimarina (strain NCIMB 400) protein is Membrane-bound lytic murein transglycosylase F.